The following is a 353-amino-acid chain: Melanin-concentrating hormone receptor 1 (353 aa).

The interval 1–26 (MDLQTSLLSTGPNASNISDGQDNLTL) is disordered. Over 1 to 45 (MDLQTSLLSTGPNASNISDGQDNLTLPGSPPRTGSVSYINIIMPS) the chain is Extracellular. N-linked (GlcNAc...) asparagine glycans are attached at residues asparagine 13, asparagine 16, and asparagine 23. Residues 46–66 (VFGTICLLGIVGNSTVIFAVV) traverse the membrane as a helical segment. The Cytoplasmic portion of the chain corresponds to 67 to 79 (KKSKLHWCSNVPD). Residues 80-100 (IFIINLSVVDLLFLLGMPFMI) traverse the membrane as a helical segment. The Extracellular portion of the chain corresponds to 101-116 (HQLMGNGVWHFGETMC). Cysteine 116 and cysteine 194 are disulfide-bonded. Residues 117–139 (TLITAMDANSQFTSTYILTAMTI) traverse the membrane as a helical segment. Over 140–161 (DRYLATVHPISSTKFRKPSMAT) the chain is Cytoplasmic. Residues 162 to 182 (LVICLLWALSFISITPVWLYA) traverse the membrane as a helical segment. Residues 183–204 (RLIPFPGGAVGCGIRLPNPDTD) are Extracellular-facing. Residues 205 to 225 (LYWFTLYQFFLAFALPFVVIT) traverse the membrane as a helical segment. The Cytoplasmic segment spans residues 226 to 256 (AAYVKILQRMTSSVAPASQRSIRLRTKRVTR). The helical transmembrane segment at 257-277 (TAIAICLVFFVCWAPYYVLQL) threads the bilayer. Residues 278–294 (TQLSISRPTLTFVYLYN) lie on the Extracellular side of the membrane. Residues 295–315 (AAISLGYANSCLNPFVYIVLC) form a helical membrane-spanning segment. At 316–353 (ETFRKRLVLSVKPAAQGQLRTVSNAQTADEERTESKGT) the chain is on the cytoplasmic side.

It belongs to the G-protein coupled receptor 1 family. As to quaternary structure, interacts with NCDN. In terms of tissue distribution, high level in the brain, moderate amounts in the eye and skeletal muscle, and small amounts in tongue and pituitary.

Its subcellular location is the cell membrane. Receptor for melanin-concentrating hormone, coupled to G proteins that inhibit adenylyl cyclase. The chain is Melanin-concentrating hormone receptor 1 from Rattus norvegicus (Rat).